Reading from the N-terminus, the 340-residue chain is GTPase Obg (340 aa).

The 161-residue stretch at 1–161 folds into the Obg domain; the sequence is MKFVDMTNIT…QHLLLELLLI (161 aa). The OBG-type G domain maps to 162 to 335; sequence ANVGIFGLPN…LCNSIMKFIM (174 aa). Residues 168–175, 193–197, 215–218, 285–288, and 316–318 each bind GTP; these read GLPNSGKS, FTTLV, DIPG, NKID, and SSI. 2 residues coordinate Mg(2+): Ser-175 and Thr-195.

It belongs to the TRAFAC class OBG-HflX-like GTPase superfamily. OBG GTPase family. As to quaternary structure, monomer. Requires Mg(2+) as cofactor.

The protein resides in the cytoplasm. In terms of biological role, an essential GTPase which binds GTP, GDP and possibly (p)ppGpp with moderate affinity, with high nucleotide exchange rates and a fairly low GTP hydrolysis rate. Plays a role in control of the cell cycle, stress response, ribosome biogenesis and in those bacteria that undergo differentiation, in morphogenesis control. The polypeptide is GTPase Obg (Blochmanniella pennsylvanica (strain BPEN)).